We begin with the raw amino-acid sequence, 135 residues long: Large ribosomal subunit protein uL16c (135 aa).

Positions 1-17 (MLSPKRTRFRKQHRGRM) are enriched in basic residues. The segment at 1–20 (MLSPKRTRFRKQHRGRMKGT) is disordered.

This sequence belongs to the universal ribosomal protein uL16 family. In terms of assembly, part of the 50S ribosomal subunit.

The protein localises to the plastid. It localises to the chloroplast. The polypeptide is Large ribosomal subunit protein uL16c (Lemna minor (Common duckweed)).